The primary structure comprises 113 residues: Large ribosomal subunit protein bL17 (113 aa).

Belongs to the bacterial ribosomal protein bL17 family. In terms of assembly, part of the 50S ribosomal subunit. Contacts protein L32.

The sequence is that of Large ribosomal subunit protein bL17 from Clostridioides difficile (strain 630) (Peptoclostridium difficile).